The sequence spans 506 residues: Glutamate--tRNA ligase (506 aa).

The 'HIGH' region signature appears at 23–33 (PSPTGTPHVGL). The short motif at 267–271 (KLSKR) is the 'KMSKS' region element. Lys270 lines the ATP pocket.

Belongs to the class-I aminoacyl-tRNA synthetase family. Glutamate--tRNA ligase type 1 subfamily. Monomer.

The protein resides in the cytoplasm. The enzyme catalyses tRNA(Glu) + L-glutamate + ATP = L-glutamyl-tRNA(Glu) + AMP + diphosphate. In terms of biological role, catalyzes the attachment of glutamate to tRNA(Glu) in a two-step reaction: glutamate is first activated by ATP to form Glu-AMP and then transferred to the acceptor end of tRNA(Glu). This chain is Glutamate--tRNA ligase, found in Clavibacter michiganensis subsp. michiganensis (strain NCPPB 382).